The sequence spans 354 residues: E2F transcription factor-like E2FF (354 aa).

The DNA-binding element occupies 21–86 (RKEKSLGVLV…RGKNQYSWKG (66 aa)). Residues 104–143 (ERLGYSSSNNSDKVSNGCEREEPLTLTPDDQENSSSSKMD) form a disordered region. Over residues 108–117 (YSSSNNSDKV) the composition is skewed to polar residues. The DNA-binding element occupies 145-225 (KKEKSLWLLA…TRKPAYRWLG (81 aa)).

It belongs to the E2F/DP family. In terms of tissue distribution, high expression in young cotyledons and leaves, hypocotyls, shoot apical meristem, roots and mature pollen grains, moderate in developing trichomes, flowers and at early stages of developing anthers, and barely detectable in mature leaves. Not detected in primary root meristem, emerging lateral roots, pistils, developing embryos and siliques.

It localises to the nucleus. The protein resides in the cytoplasm. Inhibitor of E2F-dependent activation of gene expression. Binds specifically the E2 recognition site without interacting with DP proteins and prevents transcription activation by E2F/DP heterodimers. Does not bind retinoblastoma-related proteins. Acts as a growth regulator but is not associated with changes in the expression of cell cycle marker genes or in nuclear ploidy levels. Has no effect on cell proliferation, but may repress cell wall biosynthesis genes during cell elongation in differentiated cells. The chain is E2F transcription factor-like E2FF (E2FF) from Arabidopsis thaliana (Mouse-ear cress).